Here is a 309-residue protein sequence, read N- to C-terminus: MVKVYAPASIGNVSVGFDVLGAAVSPIDGTLLGDCVSVEAAETFSLQNAGRFVSKLPDDPKENIVYQCWERFCQEIGQQIPVAMRLEKNMPIGSGLGSSACSVVAGLMAMNEFCNRPLDKMTLLGLMGELEGRISGSVHYDNVAPCYLGGLQLMLEEEGFISQEVPCFKDWLWVMAYPGIKVSTAEARAILPAQYRRQDCISHGRYLAGFIHACHTQQPRLAAKLMQDVIAEPYRTRLLPGFADARKAAQDIGALACGISGSGPTLFAVCDDGATAQRMADWLTNHYLQNDEGFVHICRLDTAGARLLG.

An ATP-binding site is contributed by 91–101 (PIGSGLGSSAC).

This sequence belongs to the GHMP kinase family. Homoserine kinase subfamily.

It localises to the cytoplasm. It catalyses the reaction L-homoserine + ATP = O-phospho-L-homoserine + ADP + H(+). It participates in amino-acid biosynthesis; L-threonine biosynthesis; L-threonine from L-aspartate: step 4/5. Functionally, catalyzes the ATP-dependent phosphorylation of L-homoserine to L-homoserine phosphate. The polypeptide is Homoserine kinase (Serratia proteamaculans (strain 568)).